The following is a 367-amino-acid chain: Histidinol-phosphate aminotransferase (367 aa).

An N6-(pyridoxal phosphate)lysine modification is found at lysine 221.

The protein belongs to the class-II pyridoxal-phosphate-dependent aminotransferase family. Histidinol-phosphate aminotransferase subfamily. Homodimer. It depends on pyridoxal 5'-phosphate as a cofactor.

It catalyses the reaction L-histidinol phosphate + 2-oxoglutarate = 3-(imidazol-4-yl)-2-oxopropyl phosphate + L-glutamate. Its pathway is amino-acid biosynthesis; L-histidine biosynthesis; L-histidine from 5-phospho-alpha-D-ribose 1-diphosphate: step 7/9. This is Histidinol-phosphate aminotransferase from Paracoccus denitrificans (strain Pd 1222).